Consider the following 274-residue polypeptide: Large ribosomal subunit protein uL2 (274 aa).

Disordered regions lie at residues 35 to 55 and 224 to 274; these read FGKK…RHRG and AMNP…KLKG. Over residues 45–55 the composition is skewed to basic residues; it reads NHGRITTRHRG. A compositionally biased stretch (basic and acidic residues) spans 263–274; the sequence is KSSDKYIKKLKG.

Belongs to the universal ribosomal protein uL2 family. In terms of assembly, part of the 50S ribosomal subunit. Forms a bridge to the 30S subunit in the 70S ribosome.

One of the primary rRNA binding proteins. Required for association of the 30S and 50S subunits to form the 70S ribosome, for tRNA binding and peptide bond formation. It has been suggested to have peptidyltransferase activity; this is somewhat controversial. Makes several contacts with the 16S rRNA in the 70S ribosome. The chain is Large ribosomal subunit protein uL2 from Wolbachia pipientis subsp. Culex pipiens (strain wPip).